A 540-amino-acid polypeptide reads, in one-letter code: Chaperonin GroEL (540 aa).

ATP is bound by residues 29 to 32 (TLGP), 86 to 90 (DGTTT), Gly-413, and Asp-493. The segment at 520–540 (AEKPEPKPAPGPADPGAGMDF) is disordered.

It belongs to the chaperonin (HSP60) family. In terms of assembly, forms a cylinder of 14 subunits composed of two heptameric rings stacked back-to-back. Interacts with the co-chaperonin GroES.

Its subcellular location is the cytoplasm. The catalysed reaction is ATP + H2O + a folded polypeptide = ADP + phosphate + an unfolded polypeptide.. Together with its co-chaperonin GroES, plays an essential role in assisting protein folding. The GroEL-GroES system forms a nano-cage that allows encapsulation of the non-native substrate proteins and provides a physical environment optimized to promote and accelerate protein folding. This chain is Chaperonin GroEL, found in Tropheryma whipplei (strain TW08/27) (Whipple's bacillus).